The following is a 184-amino-acid chain: GTP cyclohydrolase 1 (184 aa).

Residues Cys75, His78, and Cys146 each coordinate Zn(2+).

This sequence belongs to the GTP cyclohydrolase I family. As to quaternary structure, homomer.

The enzyme catalyses GTP + H2O = 7,8-dihydroneopterin 3'-triphosphate + formate + H(+). It participates in cofactor biosynthesis; 7,8-dihydroneopterin triphosphate biosynthesis; 7,8-dihydroneopterin triphosphate from GTP: step 1/1. This chain is GTP cyclohydrolase 1, found in Streptococcus pneumoniae serotype 19F (strain G54).